The sequence spans 93 residues: Small ribosomal subunit protein uS19 (93 aa).

This sequence belongs to the universal ribosomal protein uS19 family.

In terms of biological role, protein S19 forms a complex with S13 that binds strongly to the 16S ribosomal RNA. The protein is Small ribosomal subunit protein uS19 of Nautilia profundicola (strain ATCC BAA-1463 / DSM 18972 / AmH).